The following is a 374-amino-acid chain: Alcohol dehydrogenase class-3 (374 aa).

A2 carries the post-translational modification N-acetylalanine. Residues C45, H67, C97, C100, C103, C111, and C174 each coordinate Zn(2+). Position 233 is an N6-succinyllysine (K233). Phosphoserine is present on S247. K315 bears the N6-succinyllysine mark. S324 carries the phosphoserine modification.

Belongs to the zinc-containing alcohol dehydrogenase family. Class-III subfamily. In terms of assembly, homodimer. Requires Zn(2+) as cofactor.

Its subcellular location is the cytoplasm. The enzyme catalyses a primary alcohol + NAD(+) = an aldehyde + NADH + H(+). The catalysed reaction is a secondary alcohol + NAD(+) = a ketone + NADH + H(+). It catalyses the reaction S-(hydroxymethyl)glutathione + NADP(+) = S-formylglutathione + NADPH + H(+). It carries out the reaction S-(hydroxymethyl)glutathione + NAD(+) = S-formylglutathione + NADH + H(+). The enzyme catalyses 20-oxo-(5Z,8Z,11Z,14Z)-eicosatetraenoate + NAD(+) + H2O = (5Z,8Z,11Z,14Z)-eicosatetraenedioate + NADH + 2 H(+). The catalysed reaction is 20-hydroxy-(5Z,8Z,11Z,14Z)-eicosatetraenoate + NAD(+) = 20-oxo-(5Z,8Z,11Z,14Z)-eicosatetraenoate + NADH + H(+). It catalyses the reaction S-nitrosoglutathione + NADH + H(+) = S-(hydroxysulfenamide)glutathione + NAD(+). Its function is as follows. Catalyzes the oxidation of long-chain primary alcohols and the oxidation of S-(hydroxymethyl) glutathione. Also oxidizes long chain omega-hydroxy fatty acids, such as 20-HETE, producing both the intermediate aldehyde, 20-oxoarachidonate and the end product, a dicarboxylic acid, (5Z,8Z,11Z,14Z)-eicosatetraenedioate. Class-III ADH is remarkably ineffective in oxidizing ethanol. Required for clearance of cellular formaldehyde, a cytotoxic and carcinogenic metabolite that induces DNA damage. Also acts as a S-nitroso-glutathione reductase by catalyzing the NADH-dependent reduction of S-nitrosoglutathione, thereby regulating protein S-nitrosylation. This is Alcohol dehydrogenase class-3 from Bos taurus (Bovine).